Consider the following 42-residue polypeptide: Photosystem II reaction center protein J (42 aa).

A helical transmembrane segment spans residues 10–30 (IPLWLVLTIIGLAAIALLALF).

The protein belongs to the PsbJ family. PSII is composed of 1 copy each of membrane proteins PsbA, PsbB, PsbC, PsbD, PsbE, PsbF, PsbH, PsbI, PsbJ, PsbK, PsbL, PsbM, PsbT, PsbY, PsbZ, Psb30/Ycf12, at least 3 peripheral proteins of the oxygen-evolving complex and a large number of cofactors. It forms dimeric complexes.

The protein resides in the plastid. The protein localises to the chloroplast thylakoid membrane. Its function is as follows. This protein is a component of the reaction center of photosystem II. Functionally, one of the components of the core complex of photosystem II (PSII). PSII is a light-driven water:plastoquinone oxidoreductase that uses light energy to abstract electrons from H(2)O, generating O(2) and a proton gradient subsequently used for ATP formation. It consists of a core antenna complex that captures photons, and an electron transfer chain that converts photonic excitation into a charge separation. The protein is Photosystem II reaction center protein J of Euglena gracilis.